The following is a 95-amino-acid chain: Protein TusB (95 aa).

This sequence belongs to the DsrH/TusB family. Heterohexamer, formed by a dimer of trimers. The hexameric TusBCD complex contains 2 copies each of TusB, TusC and TusD. The TusBCD complex interacts with TusE.

Its subcellular location is the cytoplasm. In terms of biological role, part of a sulfur-relay system required for 2-thiolation of 5-methylaminomethyl-2-thiouridine (mnm(5)s(2)U) at tRNA wobble positions. The polypeptide is Protein TusB (Serratia proteamaculans (strain 568)).